Here is a 172-residue protein sequence, read N- to C-terminus: 3-hydroxydecanoyl-[acyl-carrier-protein] dehydratase (172 aa).

His71 is a catalytic residue.

The protein belongs to the thioester dehydratase family. FabA subfamily. As to quaternary structure, homodimer.

It is found in the cytoplasm. The enzyme catalyses a (3R)-hydroxyacyl-[ACP] = a (2E)-enoyl-[ACP] + H2O. It catalyses the reaction (3R)-hydroxydecanoyl-[ACP] = (2E)-decenoyl-[ACP] + H2O. The catalysed reaction is (2E)-decenoyl-[ACP] = (3Z)-decenoyl-[ACP]. It functions in the pathway lipid metabolism; fatty acid biosynthesis. In terms of biological role, necessary for the introduction of cis unsaturation into fatty acids. Catalyzes the dehydration of (3R)-3-hydroxydecanoyl-ACP to E-(2)-decenoyl-ACP and then its isomerization to Z-(3)-decenoyl-ACP. Can catalyze the dehydratase reaction for beta-hydroxyacyl-ACPs with saturated chain lengths up to 16:0, being most active on intermediate chain length. The protein is 3-hydroxydecanoyl-[acyl-carrier-protein] dehydratase of Yersinia pseudotuberculosis serotype O:1b (strain IP 31758).